The chain runs to 594 residues: UV-stimulated scaffold protein A homolog (594 aa).

The tract at residues 24 to 170 (RKNLNRFIRE…VTLKKTKFVD (147 aa)) is VHS-like. Positions 170-198 (DYENGAKKIEAERKRKKILEERKMKMIEN) form a coiled coil. A UVSSA-type zinc finger spans residues 466 to 493 (RKVCLAKMKSGKLCPRKDYYTCPLHGKI). Positions 469, 479, 487, and 490 each coordinate Zn(2+). Residues 503 to 540 (INEEDRLEENYRKEQNHLKEADKIRQMIEKEYESKTKR) adopt a coiled-coil conformation. The segment at 533–558 (EYESKTKRRKKHDVDTTASEDVRNRL) is disordered. Residues 544-558 (HDVDTTASEDVRNRL) are compositionally biased toward basic and acidic residues.

This sequence belongs to the UVSSA family.

It localises to the chromosome. In terms of biological role, factor involved in transcription-coupled nucleotide excision repair (TC-NER) in response to UV damage. TC-NER allows RNA polymerase II-blocking lesions to be rapidly removed from the transcribed strand of active genes. This chain is UV-stimulated scaffold protein A homolog, found in Caenorhabditis elegans.